The sequence spans 558 residues: DALR anticodon-binding domain-containing protein 3 (558 aa).

Residues 213–240 are disordered; it reads KALENSAYRDRETEKGKRRSRGEEIEGE.

The chain is DALR anticodon-binding domain-containing protein 3 (dalrd3) from Danio rerio (Zebrafish).